The primary structure comprises 276 residues: Secreted LysM effector LysM10 (276 aa).

Positions M1–A22 are cleaved as a signal peptide. N27, N104, and N140 each carry an N-linked (GlcNAc...) asparagine glycan. The region spanning K219–I264 is the LysM domain. Residue N267 is glycosylated (N-linked (GlcNAc...) asparagine).

It belongs to the secreted LysM effector family.

The protein localises to the secreted. Functionally, secreted LysM effector that might have a role in sequestration of chitin oligosaccharides (breakdown products of fungal cell walls that are released during invasion and act as triggers of host immunity) to dampen host defense. This Penicillium expansum (Blue mold rot fungus) protein is Secreted LysM effector LysM10.